A 511-amino-acid chain; its full sequence is Cytochrome P450 89A9 (511 aa).

A helical; Signal-anchor for type II membrane protein transmembrane segment spans residues 6–26 (IIFLIISSLTFSIFLKLIFFF). Residue Cys454 participates in heme binding.

It belongs to the cytochrome P450 family. It depends on heme as a cofactor.

The protein localises to the endoplasmic reticulum membrane. It carries out the reaction primary fluorescent chlorophyll catabolite + reduced [NADPH--hemoprotein reductase] + O2 = primary fluorescent dioxobilin-type chlorophyll catabolite + formate + oxidized [NADPH--hemoprotein reductase] + 2 H(+). It participates in porphyrin-containing compound metabolism; chlorophyll degradation. Involved in the chlorophyll breakdown by its action in nonpolar primary fluorescent chlorophyll catabolite (pFCC) decarbonylation. Involved in the formation of major chlorophyll breakdown products, including non-fluorescent dioxobilin-type chlorophyll catabolites (NDCCs), during leaf senescence. The sequence is that of Cytochrome P450 89A9 from Arabidopsis thaliana (Mouse-ear cress).